Here is a 431-residue protein sequence, read N- to C-terminus: Enolase (431 aa).

Gln-167 is a binding site for (2R)-2-phosphoglycerate. The Proton donor role is filled by Glu-209. Mg(2+)-binding residues include Asp-246, Glu-289, and Asp-316. The (2R)-2-phosphoglycerate site is built by Lys-341, Arg-370, Ser-371, and Lys-392. Residue Lys-341 is the Proton acceptor of the active site.

It belongs to the enolase family. In terms of assembly, component of the RNA degradosome, a multiprotein complex involved in RNA processing and mRNA degradation. It depends on Mg(2+) as a cofactor.

It is found in the cytoplasm. It localises to the secreted. Its subcellular location is the cell surface. The catalysed reaction is (2R)-2-phosphoglycerate = phosphoenolpyruvate + H2O. It participates in carbohydrate degradation; glycolysis; pyruvate from D-glyceraldehyde 3-phosphate: step 4/5. Functionally, catalyzes the reversible conversion of 2-phosphoglycerate (2-PG) into phosphoenolpyruvate (PEP). It is essential for the degradation of carbohydrates via glycolysis. In Shewanella sp. (strain ANA-3), this protein is Enolase.